Reading from the N-terminus, the 171-residue chain is ATP synthase subunit b (171 aa).

The chain crosses the membrane as a helical span at residues 2 to 22 (FVVKMVLGFLILLSPLCATGL).

Belongs to the ATPase B chain family. F-type ATPases have 2 components, F(1) - the catalytic core - and F(0) - the membrane proton channel. F(1) has five subunits: alpha(3), beta(3), gamma(1), delta(1), epsilon(1). F(0) has three main subunits: a(1), b(2) and c(10-14). The alpha and beta chains form an alternating ring which encloses part of the gamma chain. F(1) is attached to F(0) by a central stalk formed by the gamma and epsilon chains, while a peripheral stalk is formed by the delta and b chains.

It is found in the cell inner membrane. In terms of biological role, f(1)F(0) ATP synthase produces ATP from ADP in the presence of a proton or sodium gradient. F-type ATPases consist of two structural domains, F(1) containing the extramembraneous catalytic core and F(0) containing the membrane proton channel, linked together by a central stalk and a peripheral stalk. During catalysis, ATP synthesis in the catalytic domain of F(1) is coupled via a rotary mechanism of the central stalk subunits to proton translocation. Functionally, component of the F(0) channel, it forms part of the peripheral stalk, linking F(1) to F(0). The chain is ATP synthase subunit b from Helicobacter pylori (strain ATCC 700392 / 26695) (Campylobacter pylori).